The following is a 204-amino-acid chain: uncharacterized protein (204 aa).

Residues 1–20 (MQNPLPEVMSPEHDKRTTTP) form a disordered region.

This is an uncharacterized protein from Frog virus 3 (isolate Goorha) (FV-3).